Here is a 454-residue protein sequence, read N- to C-terminus: UPF0210 protein EUBREC_1565 (454 aa).

Belongs to the UPF0210 family. As to quaternary structure, homodimer.

This is UPF0210 protein EUBREC_1565 from Agathobacter rectalis (strain ATCC 33656 / DSM 3377 / JCM 17463 / KCTC 5835 / VPI 0990) (Eubacterium rectale).